Reading from the N-terminus, the 274-residue chain is 4-diphosphocytidyl-2-C-methyl-D-erythritol kinase (274 aa).

Residue lysine 10 is part of the active site. 101–111 (PTQAGLGGGSA) serves as a coordination point for ATP. Aspartate 143 is a catalytic residue.

This sequence belongs to the GHMP kinase family. IspE subfamily.

The enzyme catalyses 4-CDP-2-C-methyl-D-erythritol + ATP = 4-CDP-2-C-methyl-D-erythritol 2-phosphate + ADP + H(+). It functions in the pathway isoprenoid biosynthesis; isopentenyl diphosphate biosynthesis via DXP pathway; isopentenyl diphosphate from 1-deoxy-D-xylulose 5-phosphate: step 3/6. In terms of biological role, catalyzes the phosphorylation of the position 2 hydroxy group of 4-diphosphocytidyl-2C-methyl-D-erythritol. In Helicobacter pylori (strain J99 / ATCC 700824) (Campylobacter pylori J99), this protein is 4-diphosphocytidyl-2-C-methyl-D-erythritol kinase.